The sequence spans 157 residues: Mini-ribonuclease 3 (157 aa).

Residue Asp-18 is part of the active site. The tract at residues 126 to 157 (EEDEGKGKGETAKEEESITDALSPAEQSEIDC) is disordered. Over residues 130-141 (GKGKGETAKEEE) the composition is skewed to basic and acidic residues.

This sequence belongs to the MrnC RNase family. Homodimer. It depends on Mg(2+) as a cofactor.

It localises to the cytoplasm. Functionally, involved in correct processing of both the 5' and 3' ends of 23S rRNA precursor. Processes 30S rRNA precursor transcript even in absence of ribonuclease 3 (Rnc); Rnc processes 30S rRNA into smaller rRNA precursors. This Desulfitobacterium hafniense (strain Y51) protein is Mini-ribonuclease 3.